Reading from the N-terminus, the 60-residue chain is Large ribosomal subunit protein bL32 (60 aa).

The protein belongs to the bacterial ribosomal protein bL32 family.

This is Large ribosomal subunit protein bL32 from Borrelia turicatae (strain 91E135).